Here is a 265-residue protein sequence, read N- to C-terminus: Selenoprotein Pb (265 aa).

Positions 1-18 are cleaved as a signal peptide; sequence MQALWPLLLSALPALLGA. N-linked (GlcNAc...) asparagine glycosylation occurs at asparagine 28. Position 64 (selenocysteine 64) is a non-standard amino acid, selenocysteine. Asparagine 88, asparagine 178, asparagine 184, and asparagine 207 each carry an N-linked (GlcNAc...) asparagine glycan. Positions 188–265 are disordered; it reads SESSDSTKND…SHQEHVHNHR (78 aa). Polar residues predominate over residues 201 to 211; sequence ENNQRPNSTEP. The span at 215–231 shows a compositional bias: basic residues; sequence AHHHHHQQHEPHHHHHN. Over residues 239–265 the composition is skewed to basic and acidic residues; that stretch reads KSGDSDVTGKPKEPPHHSHQEHVHNHR.

Its subcellular location is the secreted. In terms of biological role, might be responsible for some of the extracellular antioxidant defense properties of selenium. The protein is Selenoprotein Pb (sepp1b) of Danio rerio (Zebrafish).